The primary structure comprises 710 residues: Lactoperoxidase (710 aa).

Positions 1-22 are cleaved as a signal peptide; that stretch reads MKVLLRLPALLASLTLLQMAAS. A propeptide spanning residues 23–98 is cleaved from the precursor; it reads TRNATRTATI…WEQSLKRLRR (76 aa). 3 N-linked (GlcNAc...) asparagine glycosylation sites follow: asparagine 25, asparagine 104, and asparagine 131. Cysteine 130 and cysteine 143 are disulfide-bonded. Residue aspartate 223 coordinates heme b. Histidine 224 functions as the Proton acceptor in the catalytic mechanism. Aspartate 225 contributes to the Ca(2+) binding site. Asparagine 238 is a glycosylation site (N-linked (GlcNAc...) asparagine). 2 disulfides stabilise this stretch: cysteine 244–cysteine 254 and cysteine 248–cysteine 272. Residues threonine 299, phenylalanine 301, aspartate 303, and serine 305 each coordinate Ca(2+). Serine 313 carries the phosphoserine modification. Residue asparagine 320 is glycosylated (N-linked (GlcNAc...) asparagine). Cysteine 352 and cysteine 363 are disulfide-bonded. The heme b site is built by glutamate 373 and histidine 466. Tyrosine 480 is modified (3'-nitrotyrosine). Cystine bridges form between cysteine 571/cysteine 628 and cysteine 669/cysteine 694.

This sequence belongs to the peroxidase family. XPO subfamily. Ca(2+) is required as a cofactor. It depends on heme b as a cofactor. In terms of tissue distribution, expressed in the lacrimal gland with higher levels and 3-fold higher activity in adult females than males and secreted into tears (at protein level).

Its subcellular location is the secreted. The protein localises to the cytoplasm. It carries out the reaction 2 a phenolic donor + H2O2 = 2 a phenolic radical donor + 2 H2O. The catalysed reaction is thiocyanate + H2O2 + H(+) = hypothiocyanous acid + H2O. The enzyme catalyses iodide + H2O2 = hypoiodite + H2O. Its function is as follows. Heme-containing oxidoreductase which catalyzes the conversion of thiocyanate (SCN(-)) into antimicrobial agent hypothiocyanous acid (OSCN(-)) in the presence of hydrogen peroxide (H2O2). Also involved in the conversion of iodide (I(-)) into hypoiodite (IO(-)) in the presence of H2O2. Responsible for the inactivation of a wide range of micro-organisms and hence, important component of defense mechanism. May be implicated in airway host defense against infection. May contribute to maintaining an appropriate H2O2 cellular level, therefore protecting cells from H2O2-caused injuries and inflammation. This chain is Lactoperoxidase (LPO), found in Mesocricetus auratus (Golden hamster).